The following is a 216-amino-acid chain: Protein Syd (216 aa).

It belongs to the Syd family.

The protein localises to the cell inner membrane. Interacts with the SecY protein in vivo. May bind preferentially to an uncomplexed state of SecY, thus functioning either as a chelating agent for excess SecY in the cell or as a regulatory factor that negatively controls the translocase function. In Shewanella baltica (strain OS195), this protein is Protein Syd.